The sequence spans 334 residues: Protein-methionine-sulfoxide reductase catalytic subunit MsrP (334 aa).

Residues 1–44 (MKKNQFLKESDVTAESVFFMKRRQVLKALGISAAALSLPHAAHA) constitute a signal peptide (tat-type signal). Residues asparagine 88, 91–92 (YE), cysteine 146, threonine 181, asparagine 233, arginine 238, and 249–251 (GIK) contribute to the Mo-molybdopterin site.

Belongs to the MsrP family. In terms of assembly, heterodimer of a catalytic subunit (MsrP) and a heme-binding subunit (MsrQ). Mo-molybdopterin is required as a cofactor. Post-translationally, predicted to be exported by the Tat system. The position of the signal peptide cleavage has not been experimentally proven.

It is found in the periplasm. It carries out the reaction L-methionyl-[protein] + a quinone + H2O = L-methionyl-(S)-S-oxide-[protein] + a quinol. It catalyses the reaction L-methionyl-[protein] + a quinone + H2O = L-methionyl-(R)-S-oxide-[protein] + a quinol. In terms of biological role, part of the MsrPQ system that repairs oxidized periplasmic proteins containing methionine sulfoxide residues (Met-O), using respiratory chain electrons. Thus protects these proteins from oxidative-stress damage caused by reactive species of oxygen and chlorine generated by the host defense mechanisms. MsrPQ is essential for the maintenance of envelope integrity under bleach stress, rescuing a wide series of structurally unrelated periplasmic proteins from methionine oxidation, including the primary periplasmic chaperone SurA and the lipoprotein Pal. The catalytic subunit MsrP is non-stereospecific, being able to reduce both (R-) and (S-) diastereoisomers of methionine sulfoxide. In Escherichia coli O9:H4 (strain HS), this protein is Protein-methionine-sulfoxide reductase catalytic subunit MsrP.